The chain runs to 36 residues: uncharacterized protein (36 aa).

Over residues 1–14 (MNQLGSGPTKQGVA) the composition is skewed to polar residues. Residues 1 to 36 (MNQLGSGPTKQGVATNTGSTGTTKNNSNLSGKGWVL) form a disordered region. Positions 15–36 (TNTGSTGTTKNNSNLSGKGWVL) are enriched in low complexity.

This is an uncharacterized protein from Dictyostelium discoideum (Social amoeba).